Consider the following 166-residue polypeptide: NAD(P)H-quinone oxidoreductase subunit I, chloroplastic (166 aa).

2 consecutive 4Fe-4S ferredoxin-type domains span residues 55-84 (GRIHFEFDKCIACEVCVRVCPIDLPVVDWK) and 95-124 (LNYSIDFGICIFCGNCVEYCPTNCLSMTEE). Residues cysteine 64, cysteine 67, cysteine 70, cysteine 74, cysteine 104, cysteine 107, cysteine 110, and cysteine 114 each contribute to the [4Fe-4S] cluster site.

This sequence belongs to the complex I 23 kDa subunit family. As to quaternary structure, NDH is composed of at least 16 different subunits, 5 of which are encoded in the nucleus. Requires [4Fe-4S] cluster as cofactor.

Its subcellular location is the plastid. The protein resides in the chloroplast thylakoid membrane. It carries out the reaction a plastoquinone + NADH + (n+1) H(+)(in) = a plastoquinol + NAD(+) + n H(+)(out). It catalyses the reaction a plastoquinone + NADPH + (n+1) H(+)(in) = a plastoquinol + NADP(+) + n H(+)(out). In terms of biological role, NDH shuttles electrons from NAD(P)H:plastoquinone, via FMN and iron-sulfur (Fe-S) centers, to quinones in the photosynthetic chain and possibly in a chloroplast respiratory chain. The immediate electron acceptor for the enzyme in this species is believed to be plastoquinone. Couples the redox reaction to proton translocation, and thus conserves the redox energy in a proton gradient. This chain is NAD(P)H-quinone oxidoreductase subunit I, chloroplastic, found in Lasianthaea macrocephala (Lipochaeta macrocephala).